The chain runs to 200 residues: Small ribosomal subunit protein uS4 (200 aa).

Positions 92–155 (SRLDAVVYSL…QNLDIIKESV (64 aa)) constitute an S4 RNA-binding domain.

This sequence belongs to the universal ribosomal protein uS4 family. In terms of assembly, part of the 30S ribosomal subunit. Contacts protein S5. The interaction surface between S4 and S5 is involved in control of translational fidelity.

In terms of biological role, one of the primary rRNA binding proteins, it binds directly to 16S rRNA where it nucleates assembly of the body of the 30S subunit. Its function is as follows. With S5 and S12 plays an important role in translational accuracy. In Staphylococcus haemolyticus (strain JCSC1435), this protein is Small ribosomal subunit protein uS4.